The following is a 260-amino-acid chain: Indole-3-glycerol phosphate synthase (260 aa).

The protein belongs to the TrpC family.

The catalysed reaction is 1-(2-carboxyphenylamino)-1-deoxy-D-ribulose 5-phosphate + H(+) = (1S,2R)-1-C-(indol-3-yl)glycerol 3-phosphate + CO2 + H2O. It functions in the pathway amino-acid biosynthesis; L-tryptophan biosynthesis; L-tryptophan from chorismate: step 4/5. This Thermoanaerobacter sp. (strain X514) protein is Indole-3-glycerol phosphate synthase.